We begin with the raw amino-acid sequence, 1614 residues long: MAGPAPSGRTPSHAQSSLPSLPAHLQSDTHLTAHLASRFHVGLPTARLSSQALISLNTYTTSSRGPDGDKEGSAMGEAEDLAKRAFTRLGARGENQAIVFLHSSGESGSGKTTIRSHLLSSFLSFSSTPLSSKLSYAAFVFDTLTTTKSVTTPTASKAGLFLELQYDGSSSVNPTLIGGKIIDHRLERSRIASVPTGERSFHVLYYLLAGTSAAEKEHLGFDSSIHVSTSGGKLSGASIGHKRWRYLGHPTQLKVGINDADGFQHFKTALRKLEFPRSEIAEFCQILATILHLGQLDFVSGQATTTTAEESGGYSHEGGETVTVVKNKDVLSVIAAFLGLGVEELETSFGYRTKTIRRERVTVMLDPKGARQNADGLARTLYSLLVAYIFEGINQRICAAEDSVANTVSILDFPGFSQASATGSTLDQLLSNAATESLYNFCLQSFFERKAEMLDREEVTVPATSYFDNSDATRGLLKSGNGLLSILDDQTKRGRTDSQFLESVKKRFENKNPAITVGSTGQGTTLISQGARSAFTVKHFAGEVDYPVQGLLEENGDVVSGDLMNLMRSTSSDFVRDLFGQEALQTVTHPQERTAIMQAQVSSKPMRMPSMARRKAGPSRLAFDAPEGDDQDEYDSQAGSMSKSSARRKSTMLANGMQGAAGQFLSSLDIVSKCLNSANLNPYFVFCLKPNDRRIANQFDSKCVRAQVQTFGIAEISQRLRNADFSIFLPFAEFLGLAEIGNVVVGSDKEKSEVVLDEKRWPGNEARVGSTGVFLSERCWADLAKLGERVVPVFPAEGSDEGGDNLLHARAGGYADSKVRLLGPTDQSPGGFIYGEDGKQGYSSSREFDGRSDAGASAFNSGDMFRNLDTREQMLEKGNEKKMEEVDEAPVSGSRKRWMAIVYLLTFYIPDFLIKTFGRMPRKDVRVAWREKLAINLIIWFSCAFAIFFIVAFPGLICPTQHVYSTAELSSHNGKDGHNSFVAIRGIVFNLDKFMPSHYPDIVPEKSLKKYAGTDATGLFPVQVSALCPGKDGSIDPTVLLDYSSTNVSGSATTVSTSDTNWVYHDFRYFTNDSRPDWFQEQMIMLKANYFKGWIGYTPTYMKTLGDKSQYIGSINGRVYDLTTYVAGGRRVQAPVGKSVPANVDRDFMDDLVVELFQRLPGQDLTKYWEDLQISDVMRERMQLCLDNLFFVGHVDTRNSPRCQFARYFILAISIFICLIVVFKFLAALQFSRKNLPENLDKFIICQVPAYTEDEESLRRAIDSMARMRYDDKRKLLVVICDGMIIGQGNDRPTPRIVLDILGVPESVDPEPLSFESLGEGMKQHNMGKIYSGLYEVMGHIVPFLVVVKVGKPSEVARPGNRGKRDSQMVLMRFLNRVHYNLPMSPMELEIYHQIRNIIGVNPTFYEFILQVDADTVVAPDAATRMVSTLLADTRILGVCGETALSNAKTSMVTMIQVYEYYISHNLVKAFESLFGSITCLPGCFTMYRIRSADSGKPLFVSKEIVEAYSEIRVDTLHMKNLLHLGEDRYLTTLLIKHHPKYKTKYISAAKAFTIAPESFAVFLSQRRRWINSTVHNLIELIPLNQLCGFCCFSMRFIVFVDLISTIIQPVTVA.

Residues 1-22 form a disordered region; sequence MAGPAPSGRTPSHAQSSLPSLP. The Myosin motor domain occupies 1–788; that stretch reads MAGPAPSGRT…CWADLAKLGE (788 aa). The segment covering 9–19 has biased composition (polar residues); it reads RTPSHAQSSLP. Residue 105–112 participates in ATP binding; that stretch reads GESGSGKT. Residues 600-650 form a disordered region; that stretch reads QVSSKPMRMPSMARRKAGPSRLAFDAPEGDDQDEYDSQAGSMSKSSARRKS. Residues 626–635 show a composition bias toward acidic residues; that stretch reads PEGDDQDEYD. Residues 668-692 form an actin-binding region; the sequence is LDIVSKCLNSANLNPYFVFCLKPND. The next 2 helical transmembrane spans lie at 898 to 918 and 937 to 957; these read WMAIVYLLTFYIPDFLIKTFG and LIIWFSCAFAIFFIVAFPGLI. The Cytochrome b5 heme-binding domain occupies 961–1020; it reads QHVYSTAELSSHNGKDGHNSFVAIRGIVFNLDKFMPSHYPDIVPEKSLKKYAGTDATGLF. Asn1047 and Asn1072 each carry an N-linked (GlcNAc...) asparagine glycan. Residues 1209 to 1229 traverse the membrane as a helical segment; that stretch reads FILAISIFICLIVVFKFLAAL. N-linked (GlcNAc...) asparagine glycosylation is present at Asn1572.

The protein in the N-terminal section; belongs to the TRAFAC class myosin-kinesin ATPase superfamily. Myosin family. In the C-terminal section; belongs to the chitin synthase family. Class V subfamily.

The protein resides in the cell membrane. Its subcellular location is the cell septum. It is found in the cell tip. The enzyme catalyses [(1-&gt;4)-N-acetyl-beta-D-glucosaminyl](n) + UDP-N-acetyl-alpha-D-glucosamine = [(1-&gt;4)-N-acetyl-beta-D-glucosaminyl](n+1) + UDP + H(+). Functionally, polymerizes chitin, a structural polymer of the cell wall and septum, by transferring the sugar moiety of UDP-GlcNAc to the non-reducing end of the growing chitin polymer. Acts as the major chitin synthase in Aspergillus niger involved in cell wall integrity which is principally responsible for chitin synthesis at the lateral cell wall. Plays an important role in septal growth or maintenance. Mediates colony spore formation. This chain is Chitin synthase csmA, found in Aspergillus niger (strain ATCC MYA-4892 / CBS 513.88 / FGSC A1513).